Here is a 281-residue protein sequence, read N- to C-terminus: NADPH-dependent 7-cyano-7-deazaguanine reductase (281 aa).

87-89 (VES) lines the substrate pocket. 89–90 (SK) contributes to the NADPH binding site. C188 functions as the Thioimide intermediate in the catalytic mechanism. Residue D195 is the Proton donor of the active site. 227–228 (HE) contacts substrate. 256-257 (RG) lines the NADPH pocket.

The protein belongs to the GTP cyclohydrolase I family. QueF type 2 subfamily. Homodimer.

It localises to the cytoplasm. It catalyses the reaction 7-aminomethyl-7-carbaguanine + 2 NADP(+) = 7-cyano-7-deazaguanine + 2 NADPH + 3 H(+). The protein operates within tRNA modification; tRNA-queuosine biosynthesis. Catalyzes the NADPH-dependent reduction of 7-cyano-7-deazaguanine (preQ0) to 7-aminomethyl-7-deazaguanine (preQ1). The chain is NADPH-dependent 7-cyano-7-deazaguanine reductase from Aliivibrio fischeri (strain MJ11) (Vibrio fischeri).